A 368-amino-acid polypeptide reads, in one-letter code: Probable replication factor C subunit 5 (368 aa).

69–76 is an ATP binding site; it reads GPPGTGKT.

This sequence belongs to the activator 1 small subunits family. Heteropentamer of various rfc subunits that forms a complex (RFC) with PCNA in the presence of ATP.

The protein resides in the nucleus. The elongation of primed DNA templates by DNA polymerase delta and epsilon requires the action of the accessory proteins proliferating cell nuclear antigen (PCNA) and activator 1. This is Probable replication factor C subunit 5 from Caenorhabditis elegans.